A 336-amino-acid polypeptide reads, in one-letter code: Holliday junction branch migration complex subunit RuvB (336 aa).

The tract at residues Met1 to Tyr182 is large ATPase domain (RuvB-L). ATP is bound by residues Leu21, Arg22, Gly63, Lys66, Thr67, Ser68, Glu129–Phe131, Arg172, Tyr182, and Arg219. A Mg(2+)-binding site is contributed by Thr67. The segment at Ser183–Gly253 is small ATPAse domain (RuvB-S). The segment at Glu256–Phe336 is head domain (RuvB-H). Positions 310 and 315 each coordinate DNA.

The protein belongs to the RuvB family. As to quaternary structure, homohexamer. Forms an RuvA(8)-RuvB(12)-Holliday junction (HJ) complex. HJ DNA is sandwiched between 2 RuvA tetramers; dsDNA enters through RuvA and exits via RuvB. An RuvB hexamer assembles on each DNA strand where it exits the tetramer. Each RuvB hexamer is contacted by two RuvA subunits (via domain III) on 2 adjacent RuvB subunits; this complex drives branch migration. In the full resolvosome a probable DNA-RuvA(4)-RuvB(12)-RuvC(2) complex forms which resolves the HJ.

It localises to the cytoplasm. It catalyses the reaction ATP + H2O = ADP + phosphate + H(+). Functionally, the RuvA-RuvB-RuvC complex processes Holliday junction (HJ) DNA during genetic recombination and DNA repair, while the RuvA-RuvB complex plays an important role in the rescue of blocked DNA replication forks via replication fork reversal (RFR). RuvA specifically binds to HJ cruciform DNA, conferring on it an open structure. The RuvB hexamer acts as an ATP-dependent pump, pulling dsDNA into and through the RuvAB complex. RuvB forms 2 homohexamers on either side of HJ DNA bound by 1 or 2 RuvA tetramers; 4 subunits per hexamer contact DNA at a time. Coordinated motions by a converter formed by DNA-disengaged RuvB subunits stimulates ATP hydrolysis and nucleotide exchange. Immobilization of the converter enables RuvB to convert the ATP-contained energy into a lever motion, pulling 2 nucleotides of DNA out of the RuvA tetramer per ATP hydrolyzed, thus driving DNA branch migration. The RuvB motors rotate together with the DNA substrate, which together with the progressing nucleotide cycle form the mechanistic basis for DNA recombination by continuous HJ branch migration. Branch migration allows RuvC to scan DNA until it finds its consensus sequence, where it cleaves and resolves cruciform DNA. In Helicobacter pylori (strain G27), this protein is Holliday junction branch migration complex subunit RuvB.